The chain runs to 164 residues: 6,7-dimethyl-8-ribityllumazine synthase (164 aa).

5-amino-6-(D-ribitylamino)uracil-binding positions include tyrosine 27, 58–60 (ALE), and 87–89 (CVI). 92 to 93 (ET) is a (2S)-2-hydroxy-3-oxobutyl phosphate binding site. Histidine 95 functions as the Proton donor in the catalytic mechanism. Asparagine 120 contributes to the 5-amino-6-(D-ribitylamino)uracil binding site. Arginine 134 is a binding site for (2S)-2-hydroxy-3-oxobutyl phosphate.

Belongs to the DMRL synthase family.

The enzyme catalyses (2S)-2-hydroxy-3-oxobutyl phosphate + 5-amino-6-(D-ribitylamino)uracil = 6,7-dimethyl-8-(1-D-ribityl)lumazine + phosphate + 2 H2O + H(+). The protein operates within cofactor biosynthesis; riboflavin biosynthesis; riboflavin from 2-hydroxy-3-oxobutyl phosphate and 5-amino-6-(D-ribitylamino)uracil: step 1/2. In terms of biological role, catalyzes the formation of 6,7-dimethyl-8-ribityllumazine by condensation of 5-amino-6-(D-ribitylamino)uracil with 3,4-dihydroxy-2-butanone 4-phosphate. This is the penultimate step in the biosynthesis of riboflavin. The polypeptide is 6,7-dimethyl-8-ribityllumazine synthase (Methylocella silvestris (strain DSM 15510 / CIP 108128 / LMG 27833 / NCIMB 13906 / BL2)).